Consider the following 86-residue polypeptide: Large ribosomal subunit protein uL23 (86 aa).

It belongs to the universal ribosomal protein uL23 family. Part of the 50S ribosomal subunit. Contacts protein L29.

Its function is as follows. Binds to 23S rRNA. One of the proteins that surrounds the polypeptide exit tunnel on the outside of the ribosome. The polypeptide is Large ribosomal subunit protein uL23 (Methanothermobacter thermautotrophicus (strain ATCC 29096 / DSM 1053 / JCM 10044 / NBRC 100330 / Delta H) (Methanobacterium thermoautotrophicum)).